An 840-amino-acid polypeptide reads, in one-letter code: SLIT and NTRK-like protein 6 (840 aa).

Residues 1–18 (MKLWTYLLYPSLLACLSL) form the signal peptide. The 46-residue stretch at 22 to 67 (SPMPSVRGSCDTLCNCEEKDGIMIINCEEKGINKLSQISVPPSRPF) folds into the LRRNT 1 domain. Residues 23 to 609 (PMPSVRGSCD…LTDAVPLSVL (587 aa)) lie on the Extracellular side of the membrane. 5 LRR repeats span residues 89-110 (NALS…AFNG), 113-134 (LLKQ…TFHG), 137-158 (NLEF…AFSK), 161-182 (RLKV…IFRF), and 184-205 (PLTH…GFLE). In terms of domain architecture, LRRCT 1 spans 218–269 (NKWACNCELLQLKNWLENMPPQSIIGDVICYSPPPFKGSVLSRLKKESFCPT). Residues 319–360 (PSTQLPVPYCPIPCNCKVLSPSGLLIHCQERNIESLSDLQPP) form the LRRNT 2 domain. LRR repeat units lie at residues 363–384 (NPRK…DLTD), 387–408 (TLEM…SFMN), 411–432 (RLQK…MFLG), 435–456 (SLEY…TFNP), 459–480 (KLKV…IFLG), and 482–503 (PLTR…NILD). One can recognise an LRRCT 2 domain in the interval 516–567 (NPWDCSCDLVGLQQWIHKLGKGTMTDDILCTSPGHLDKKELKALNSDLLCPG). The helical transmembrane segment at 610–630 (ILGLLIVFITIVFCAAGIVVF) threads the bilayer. Topologically, residues 631–840 (VLHRRRRYKK…DYLEVLEQQT (210 aa)) are cytoplasmic. Basic and acidic residues predominate over residues 717-726 (QRSLLERENH). The disordered stretch occupies residues 717–736 (QRSLLERENHSPLTGSNMKY). Residues 727–736 (SPLTGSNMKY) are compositionally biased toward polar residues.

The protein belongs to the SLITRK family. As to expression, in the embryo, expressed in otic cyst, lateral trunk epidermis and underlying mesodermal tissue, limb bud, maxillary process, cochlea, retina, tongue, tooth primordium, central nervous system, and primordia of visceral organs including lung, gastrointestinal tract and pancreas. In the central nervous system, expressed primarily in dorsal thalamus, cerebellum and medulla.

The protein localises to the cell membrane. Its function is as follows. Regulator of neurite outgrowth required for normal hearing and vision. This Mus musculus (Mouse) protein is SLIT and NTRK-like protein 6 (Slitrk6).